Reading from the N-terminus, the 347-residue chain is Ribosomal RNA small subunit methyltransferase C (347 aa).

It belongs to the methyltransferase superfamily. RsmC family. In terms of assembly, monomer.

It localises to the cytoplasm. The catalysed reaction is guanosine(1207) in 16S rRNA + S-adenosyl-L-methionine = N(2)-methylguanosine(1207) in 16S rRNA + S-adenosyl-L-homocysteine + H(+). Its function is as follows. Specifically methylates the guanine in position 1207 of 16S rRNA in the 30S particle. This is Ribosomal RNA small subunit methyltransferase C from Shewanella putrefaciens (strain CN-32 / ATCC BAA-453).